A 107-amino-acid chain; its full sequence is Nucleoid-associated protein HNE_0371 (107 aa).

It belongs to the YbaB/EbfC family. Homodimer.

The protein localises to the cytoplasm. It localises to the nucleoid. Functionally, binds to DNA and alters its conformation. May be involved in regulation of gene expression, nucleoid organization and DNA protection. This chain is Nucleoid-associated protein HNE_0371, found in Hyphomonas neptunium (strain ATCC 15444).